The sequence spans 360 residues: Isopentenyl-diphosphate delta-isomerase (360 aa).

12–13 contacts substrate; that stretch reads RK. FMN-binding positions include 69–71, Ser-99, and Asn-130; that span reads SMT. 99 to 101 contacts substrate; the sequence is SQR. Residue Gln-164 coordinates substrate. Residue Glu-165 participates in Mg(2+) binding. Residues Lys-196, Thr-226, 277–279, and 298–299 contribute to the FMN site; these read GVR and AK.

Belongs to the IPP isomerase type 2 family. Homooctamer. Dimer of tetramers. The cofactor is FMN. Requires NADPH as cofactor. It depends on Mg(2+) as a cofactor.

The protein resides in the cytoplasm. It carries out the reaction isopentenyl diphosphate = dimethylallyl diphosphate. In terms of biological role, involved in the biosynthesis of isoprenoids. Catalyzes the 1,3-allylic rearrangement of the homoallylic substrate isopentenyl (IPP) to its allylic isomer, dimethylallyl diphosphate (DMAPP). The chain is Isopentenyl-diphosphate delta-isomerase from Halobacterium salinarum (strain ATCC 700922 / JCM 11081 / NRC-1) (Halobacterium halobium).